The sequence spans 938 residues: Isoleucine--tRNA ligase (938 aa).

Residues 58–68 (PYANGHIHLGT) carry the 'HIGH' region motif. Glu565 provides a ligand contact to L-isoleucyl-5'-AMP. The 'KMSKS' region motif lies at 606–610 (KMSKS). An ATP-binding site is contributed by Lys609. Zn(2+) is bound by residues Cys905, Cys908, Cys925, and Cys928.

It belongs to the class-I aminoacyl-tRNA synthetase family. IleS type 1 subfamily. Monomer. Zn(2+) is required as a cofactor.

It localises to the cytoplasm. It catalyses the reaction tRNA(Ile) + L-isoleucine + ATP = L-isoleucyl-tRNA(Ile) + AMP + diphosphate. Catalyzes the attachment of isoleucine to tRNA(Ile). As IleRS can inadvertently accommodate and process structurally similar amino acids such as valine, to avoid such errors it has two additional distinct tRNA(Ile)-dependent editing activities. One activity is designated as 'pretransfer' editing and involves the hydrolysis of activated Val-AMP. The other activity is designated 'posttransfer' editing and involves deacylation of mischarged Val-tRNA(Ile). This Nitratidesulfovibrio vulgaris (strain DSM 19637 / Miyazaki F) (Desulfovibrio vulgaris) protein is Isoleucine--tRNA ligase.